We begin with the raw amino-acid sequence, 229 residues long: Probable endo-1,4-beta-xylanase A (229 aa).

The signal sequence occupies residues 1 to 18; that stretch reads MVSFKYLFLAASALGALA. N-linked (GlcNAc...) asparagine glycosylation is found at Asn30 and Asn100. The 189-residue stretch at 41 to 229 folds into the GH11 domain; that stretch reads AGTPSSTGWN…SSGSSSITVY (189 aa). The active-site Nucleophile is the Glu125. Glu216 functions as the Proton donor in the catalytic mechanism.

Belongs to the glycosyl hydrolase 11 (cellulase G) family.

Its subcellular location is the secreted. It carries out the reaction Endohydrolysis of (1-&gt;4)-beta-D-xylosidic linkages in xylans.. Its pathway is glycan degradation; xylan degradation. Functionally, endo-1,4-beta-xylanase involved in the hydrolysis of xylan, a major structural heterogeneous polysaccharide found in plant biomass representing the second most abundant polysaccharide in the biosphere, after cellulose. This Aspergillus clavatus (strain ATCC 1007 / CBS 513.65 / DSM 816 / NCTC 3887 / NRRL 1 / QM 1276 / 107) protein is Probable endo-1,4-beta-xylanase A (xlnA).